Reading from the N-terminus, the 479-residue chain is Ammonium transporter Rh type C (479 aa).

The Cytoplasmic portion of the chain corresponds to 1 to 9 (MAWNTNLRW). A helical membrane pass occupies residues 10 to 30 (RLPLTCLLLQVVMVILFGVFV). At 31–60 (RYDFEADAHWWSERTHKNLSDVENEFYYRY) the chain is on the extracellular side. Asn-48 carries an N-linked (GlcNAc...) asparagine glycan. A helical transmembrane segment spans residues 61-81 (PSFQDVHVMVFVGFGFLMTFL). The Cytoplasmic segment spans residues 82–85 (QRYG). A helical membrane pass occupies residues 86–106 (FSAVGFNFLLAAFGIQWALLM). Topologically, residues 107-123 (QGWFHFLQGRYIVVGVE) are extracellular. The chain crosses the membrane as a helical span at residues 124 to 144 (NLINADFCVASVCVAFGAVLG). The Cytoplasmic segment spans residues 145–148 (KVSP). The helical transmembrane segment at 149–169 (IQLLIMTFFQVTLFAVNEFIL) threads the bilayer. At 170–177 (LNLLKVKD) the chain is on the extracellular side. Residues 178–200 (AGGSMTIHTFGAYFGLTVTRILY) traverse the membrane as a helical segment. The Cytoplasmic segment spans residues 201–218 (RRNLEQSKERQNSVYQSD). The chain crosses the membrane as a helical span at residues 219–239 (LFAMIGTLFLWMYWPSFNSAI). Residues 240–250 (SYHGDSQHRAA) are Extracellular-facing. A helical transmembrane segment spans residues 251–271 (INTYCSLAACVLTSVAISSAL). Over 272 to 281 (HKKGKLDMVH) the chain is Cytoplasmic. A helical membrane pass occupies residues 282-302 (IQNATLAGGVAVGTAAEMMLM). A topological domain (extracellular) is located at residue Pro-303. A helical membrane pass occupies residues 304–324 (YGALIIGFVCGIISTLGFVYL). At 325–345 (TPFLESRLHIQDTCGINNLHG) the chain is on the cytoplasmic side. The helical transmembrane segment at 346 to 366 (IPGIIGGIVGAVTAASASLEV) threads the bilayer. Residues 367–394 (YGKEGLVHSFDFQGFKGDWTARTQGKFQ) lie on the Extracellular side of the membrane. The helical transmembrane segment at 395–415 (IYGLLVTLAMALMGGIIVGLI) threads the bilayer. Over 416-479 (LRLPFWGQPS…PMASSVPLVP (64 aa)) the chain is Cytoplasmic.

It belongs to the ammonium transporter (TC 2.A.49) family. Rh subfamily. Homotrimer. N-glycosylated.

The protein localises to the cell membrane. Its subcellular location is the apical cell membrane. It carries out the reaction NH4(+)(in) = NH4(+)(out). The enzyme catalyses methylamine(out) = methylamine(in). The catalysed reaction is CO2(out) = CO2(in). Its function is as follows. Ammonium transporter involved in the maintenance of acid-base homeostasis. Transports ammonium and its related derivative methylammonium across the plasma membrane of epithelial cells likely contributing to renal transepithelial ammonia transport and ammonia metabolism. Postulated to primarily mediate an electroneutral bidirectional transport of NH3 ammonia species according to a mechanism that implies interaction of an NH4(+) ion with acidic residues of the pore entry followed by dissociation of NH4(+) into NH3 and H(+). As a result NH3 transits through the central pore and is protonated on the extracellular side reforming NH4(+). May act as a CO2 channel providing for renal acid secretion. This chain is Ammonium transporter Rh type C (RHCG), found in Pan troglodytes (Chimpanzee).